The primary structure comprises 292 residues: Protease HtpX (292 aa).

A run of 2 helical transmembrane segments spans residues 4 to 24 and 32 to 52; these read IILFLLTNLAVMLTFSLILAV and IYGLLIMSSLFGFSGSILSLI. His-139 contributes to the Zn(2+) binding site. The active site involves Glu-140. His-143 is a Zn(2+) binding site. The next 2 helical transmembrane spans lie at 150–170 and 193–213; these read ITMTLVQGVVNTFVIFISRII and FLFFLISTFLEIIFGVLASII. Glu-222 contacts Zn(2+).

The protein belongs to the peptidase M48B family. It depends on Zn(2+) as a cofactor.

Its subcellular location is the cell membrane. The sequence is that of Protease HtpX from Buchnera aphidicola subsp. Schizaphis graminum (strain Sg).